Consider the following 840-residue polypeptide: Protein translocase subunit SecA (840 aa).

ATP contacts are provided by residues glutamine 89, 107–111, and aspartate 514; that span reads GEGKT.

Belongs to the SecA family. In terms of assembly, monomer and homodimer. Part of the essential Sec protein translocation apparatus which comprises SecA, SecYEG and auxiliary proteins SecDF-YajC and YidC.

The protein localises to the cell inner membrane. Its subcellular location is the cytoplasm. The catalysed reaction is ATP + H2O + cellular proteinSide 1 = ADP + phosphate + cellular proteinSide 2.. Part of the Sec protein translocase complex. Interacts with the SecYEG preprotein conducting channel. Has a central role in coupling the hydrolysis of ATP to the transfer of proteins into and across the cell membrane, serving as an ATP-driven molecular motor driving the stepwise translocation of polypeptide chains across the membrane. This is Protein translocase subunit SecA from Blochmanniella floridana.